Here is a 223-residue protein sequence, read N- to C-terminus: Deoxyribose-phosphate aldolase (223 aa).

Asp-89 serves as the catalytic Proton donor/acceptor. Catalysis depends on Lys-152, which acts as the Schiff-base intermediate with acetaldehyde. The active-site Proton donor/acceptor is Lys-181.

Belongs to the DeoC/FbaB aldolase family. DeoC type 1 subfamily.

It localises to the cytoplasm. The enzyme catalyses 2-deoxy-D-ribose 5-phosphate = D-glyceraldehyde 3-phosphate + acetaldehyde. It functions in the pathway carbohydrate degradation; 2-deoxy-D-ribose 1-phosphate degradation; D-glyceraldehyde 3-phosphate and acetaldehyde from 2-deoxy-alpha-D-ribose 1-phosphate: step 2/2. In terms of biological role, catalyzes a reversible aldol reaction between acetaldehyde and D-glyceraldehyde 3-phosphate to generate 2-deoxy-D-ribose 5-phosphate. The polypeptide is Deoxyribose-phosphate aldolase (Listeria innocua serovar 6a (strain ATCC BAA-680 / CLIP 11262)).